The chain runs to 202 residues: MSTTARKVISQGLQYMMLNEYLQRQLVRANYVHAQFFKTPIGTKVIVYAGVPGLVIGRKGANIKAIAEVLEREFGIENPQIDVVEVPNQDLNAKIMAYRVARALVRGVRFRRAALVALNRIMAAGARGAEIVISGKLTSQRHRTEKFTRGYVPKSGEPGEELVDEAIVHVLLKLGMYGVKVRIMKPAKMPDTILIKGVTQVG.

The KH type-2 domain maps to 18–87; the sequence is LNEYLQRQLV…NPQIDVVEVP (70 aa).

It belongs to the universal ribosomal protein uS3 family. As to quaternary structure, part of the 30S ribosomal subunit.

Functionally, binds the lower part of the 30S subunit head. The sequence is that of Small ribosomal subunit protein uS3 from Thermofilum pendens (strain DSM 2475 / Hrk 5).